Here is a 381-residue protein sequence, read N- to C-terminus: Heme A synthase (381 aa).

The disordered stretch occupies residues 1 to 28 (MSNRTIFEEVSSDSKQQSSPTPGGIDRK). 8 helical membrane passes run 36–56 (IRVW…VGGL), 125–145 (VIGL…SIPT), 151–171 (LLLP…MVAS), 187–207 (LATH…YMFL), 230–250 (STGL…VAGI), 287–307 (LVQF…VVVW), 320–340 (FAFN…IVTV), and 344–364 (APVE…VLIL). A heme-binding site is contributed by His292. His352 provides a ligand contact to heme.

It belongs to the COX15/CtaA family. Type 2 subfamily. Interacts with CtaB. Requires heme b as cofactor.

The protein resides in the cell membrane. The enzyme catalyses Fe(II)-heme o + 2 A + H2O = Fe(II)-heme a + 2 AH2. It participates in porphyrin-containing compound metabolism; heme A biosynthesis; heme A from heme O: step 1/1. Functionally, catalyzes the conversion of heme O to heme A by two successive hydroxylations of the methyl group at C8. The first hydroxylation forms heme I, the second hydroxylation results in an unstable dihydroxymethyl group, which spontaneously dehydrates, resulting in the formyl group of heme A. This Ruegeria sp. (strain TM1040) (Silicibacter sp.) protein is Heme A synthase.